We begin with the raw amino-acid sequence, 608 residues long: MKWVTFISLLFLFSSAYSRGVFRREAHKSEIAHRFNDVGEEHFIGLVLITFSQYLQKCPYEEHAKLVKEVTDLAKACVADESAANCDKSLHDIFGDKICALPSLRDTYGDVADCCEKKEPERNECFLHHKDDKPDLPPFARPEADVLCKAFHDDEKAFFGHYLYEVARRHPYFYAPELLYYAQKYKAILTECCEAADKGACLTPKLDALEGKSLISAAQERLRCASIQKFGDRAYKAWALVRLSQRFPKADFTDISKIVTDLTKVHKECCHGDLLECADDRADLAKYMCEHQETISSHLKECCDKPILEKAHCIYGLHNDETPAGLPAVAEEFVEDKDVCKNYEEAKDLFLGKFLYEYSRRHPDYSVVLLLRLGKAYEATLKKCCATDDPHACYAKVLDEFQPLVDEPKNLVKQNCELYEQLGDYNFQNALLVRYTKKVPQVSTPTLVEISRSLGKVGSKCCKHPEAERLPCVEDYLSVVLNRLCVLHEKTPVSEKVTKCCSESLVDRRPCFSALGPDETYVPKEFNAETFTFHADICTLPETERKIKKQTALVELVKHKPHATNDQLKTVVGEFTALLDKCCSAEDKEACFAVEGPKLVESSKATLG.

Residues 1–18 (MKWVTFISLLFLFSSAYS) form the signal peptide. Residues 19–24 (RGVFRR) constitute a propeptide that is removed on maturation. Albumin domains lie at 19 to 210 (RGVF…DALE), 211 to 403 (GKSL…EFQP), and 404 to 601 (LVDE…KLVE). Cu cation is bound at residue His27. Ser29 is modified (phosphoserine). Residues Glu30 and Asp37 each coordinate Ca(2+). The cysteines at positions 77 and 86 are disulfide-linked. Ser82 and Ser89 each carry phosphoserine. Zn(2+) is bound at residue His91. Intrachain disulfides connect Cys99-Cys115, Cys114-Cys125, Cys148-Cys193, Cys192-Cys201, Cys224-Cys270, and Cys269-Cys277. At Thr107 the chain carries Phosphothreonine. At Lys229 the chain carries N6-succinyllysine. Glu268 contacts Ca(2+). Positions 271 and 273 each coordinate Zn(2+). Residues Asp273, Glu276, Asp279, and Asp283 each contribute to the Ca(2+) site. 8 cysteine pairs are disulfide-bonded: Cys289–Cys303, Cys302–Cys313, Cys340–Cys385, Cys384–Cys393, Cys416–Cys462, Cys461–Cys472, Cys485–Cys501, and Cys500–Cys511. Ser297 is subject to Phosphoserine. A Phosphoserine modification is found at Ser443. Thr444 and Thr446 each carry phosphothreonine. At Lys460 the chain carries N6-succinyllysine. Ser513 carries the post-translational modification Phosphoserine. Cystine bridges form between Cys538-Cys583 and Cys582-Cys591. Lys558 is modified (N6-methyllysine). Thr570 is subject to Phosphothreonine. N6-succinyllysine is present on Lys588.

This sequence belongs to the ALB/AFP/VDB family. As to quaternary structure, interacts with FCGRT; this interaction regulates ALB homeostasis. Interacts with TASOR. In plasma, occurs in a covalently-linked complex with chromophore-bound alpha-1-microglobulin; this interaction does not prevent fatty acid binding to ALB. Phosphorylated by FAM20C in the extracellular medium. As to expression, plasma.

It is found in the secreted. Binds water, Ca(2+), Na(+), K(+), fatty acids, hormones, bilirubin and drugs. Its main function is the regulation of the colloidal osmotic pressure of blood. Major zinc transporter in plasma, typically binds about 80% of all plasma zinc. Major calcium and magnesium transporter in plasma, binds approximately 45% of circulating calcium and magnesium in plasma. Potentially has more than two calcium-binding sites and might additionally bind calcium in a non-specific manner. The shared binding site between zinc and calcium at residue Asp-273 suggests a crosstalk between zinc and calcium transport in the blood. The rank order of affinity is zinc &gt; calcium &gt; magnesium. Binds to the bacterial siderophore enterobactin and inhibits enterobactin-mediated iron uptake of E.coli from ferric transferrin, and may thereby limit the utilization of iron and growth of enteric bacteria such as E.coli. Does not prevent iron uptake by the bacterial siderophore aerobactin. In Oryctolagus cuniculus (Rabbit), this protein is Albumin (ALB).